The chain runs to 183 residues: DELTA-miturgitoxin-Cp1b (183 aa).

An N-terminal signal peptide occupies residues 1-20 (MKFSLFFSVFFLAVLHACLS). Positions 21-47 (ESEIDLEDEEHFMSSDSFLSEIQDESR) are excised as a propeptide. Residues 44-47 (DESR) carry the Processing quadruplet motif motif. Disulfide bonds link Cys-51/Cys-66, Cys-58/Cys-75, Cys-65/Cys-88, Cys-77/Cys-86, Cys-115/Cys-130, Cys-122/Cys-139, Cys-129/Cys-157, and Cys-141/Cys-155. A predicted alpha-helix region spans residues 164–177 (QAIEGALRIAKKLI). Trp-181 is subject to Tryptophan amide.

The protein belongs to the neurotoxin 19 (CSTX) family. Double-CSTX subfamily. In terms of processing, cleavage of the propeptide depends on the processing quadruplet motif (XXXR, with at least one of X being E). In terms of tissue distribution, expressed by the venom gland.

Its subcellular location is the secreted. The protein localises to the target cell membrane. Functionally, spider venom toxin that exhibits cytolytic activity by forming an alpha-helix across the membrane. Lethal to insect larvae. Causes instant paralysis and death in the larvae of the flesh fly (S.carnaria) at doses of 20 ug/g, at doses of less than 10 ug/g causes reversible paralysis. Has cytolytic activity against insect Sf9 cells. Causes stable and irreversible depolarization of fly muscle fibers, leading to contracture at higher toxin concentrations. Destabilizes membranes. This is DELTA-miturgitoxin-Cp1b from Cheiracanthium punctorium (Yellow sac spider).